The primary structure comprises 273 residues: Glutamate racemase (273 aa).

Residues 17–18 (DS) and 49–50 (YG) each bind substrate. Residue C80 is the Proton donor/acceptor of the active site. Residue 81–82 (NT) participates in substrate binding. The Proton donor/acceptor role is filled by C190. Residue 191–192 (TH) participates in substrate binding.

Belongs to the aspartate/glutamate racemases family.

The catalysed reaction is L-glutamate = D-glutamate. It functions in the pathway cell wall biogenesis; peptidoglycan biosynthesis. Provides the (R)-glutamate required for cell wall biosynthesis. This chain is Glutamate racemase, found in Corynebacterium glutamicum (strain ATCC 13032 / DSM 20300 / JCM 1318 / BCRC 11384 / CCUG 27702 / LMG 3730 / NBRC 12168 / NCIMB 10025 / NRRL B-2784 / 534).